The following is a 614-amino-acid chain: Vitamin B12 transporter BtuB (614 aa).

The N-terminal stretch at 1 to 20 is a signal peptide; it reads MIKKASLLTACSVTAFSAWA. Positions 26–33 match the TonB box motif; sequence DTLVVTAN. The 115-residue stretch at 38 to 152 folds into the TBDR plug domain; sequence PRSTVLAPTT…IGGVVNIITT (115 aa). Cyanocob(III)alamin-binding positions include Leu83, Ser85, Asn92, and 110–111; that span reads VS. In terms of domain architecture, TBDR beta-barrel spans 155–614; that stretch reads EPGTEISAGW…EYTLSGSYTF (460 aa). Transmembrane regions (beta stranded) follow at residues 158-165, 169-178, and 184-195; these read TEISAGWG, YQNYDVSTQQ, and TRVTLLGDYAHT. Positions 199, 211, 213, and 215 each coordinate Ca(2+). The next 2 beta stranded transmembrane spans lie at 217-227 and 232-248; these read FLSKTLYGALE and DAWS…NRTN. Ca(2+) contacts are provided by Tyr249 and Asp250. Cyanocob(III)alamin is bound at residue Ala251. Residue Asp261 coordinates Ca(2+). Beta stranded transmembrane passes span 263–277, 279–296, 309–325, 328–337, 353–369, 371–381, 385–400, 403–417, 434–443, 449–458, 473–490, 494–509, 517–529, and 535–550; these read RKLY…LRYN, ELIK…KDYN, TLDE…NNII, HGNVGAGVDW, YDQR…QQVG, FTFEGAARSDD, FGRH…WEFI, YRFI…KAPN, KSKQWEGAFE, VNWRISGYRN, YYNE…TANF, PLTH…ARNA, RRAK…QLDW, and DWGI…YDKD. Residue Thr309 coordinates cyanocob(III)alamin. Residue Arg517 participates in cyanocob(III)alamin binding. Cyanocob(III)alamin is bound at residue Tyr551. 3 consecutive transmembrane segments (beta stranded) span residues 558-572, 585-596, and 602-614; these read TVKM…LAVA, IANLFDKDYETV, and AGRE…SYTF. The TonB C-terminal box motif lies at 597-614; that stretch reads YGYQTAGREYTLSGSYTF.

Belongs to the TonB-dependent receptor family. BtuB (TC 1.B.14.3.1) subfamily.

The protein resides in the cell outer membrane. Involved in the active translocation of vitamin B12 (cyanocobalamin) across the outer membrane to the periplasmic space. It derives its energy for transport by interacting with the trans-periplasmic membrane protein TonB. The protein is Vitamin B12 transporter BtuB of Shigella dysenteriae serotype 1 (strain Sd197).